Reading from the N-terminus, the 132-residue chain is Small ribosomal subunit protein uS8 (132 aa).

Belongs to the universal ribosomal protein uS8 family. In terms of assembly, part of the 30S ribosomal subunit. Contacts proteins S5 and S12.

Its function is as follows. One of the primary rRNA binding proteins, it binds directly to 16S rRNA central domain where it helps coordinate assembly of the platform of the 30S subunit. This Geobacter metallireducens (strain ATCC 53774 / DSM 7210 / GS-15) protein is Small ribosomal subunit protein uS8.